The primary structure comprises 817 residues: TPR repeat-containing protein C19B12.01 (817 aa).

Disordered stretches follow at residues 276–298 (DQKS…PNHP) and 386–413 (GKSP…DGEN). TPR repeat units lie at residues 459–492 (LQMW…DPYD), 521–554 (APAQ…NPLS), 555–588 (YPTW…NPED), and 625–658 (WRIW…KGKD).

This is TPR repeat-containing protein C19B12.01 from Schizosaccharomyces pombe (strain 972 / ATCC 24843) (Fission yeast).